A 212-amino-acid polypeptide reads, in one-letter code: 3-isopropylmalate dehydratase small subunit 2 (212 aa).

It belongs to the LeuD family. LeuD type 1 subfamily. As to quaternary structure, heterodimer of LeuC and LeuD.

It carries out the reaction (2R,3S)-3-isopropylmalate = (2S)-2-isopropylmalate. It participates in amino-acid biosynthesis; L-leucine biosynthesis; L-leucine from 3-methyl-2-oxobutanoate: step 2/4. Catalyzes the isomerization between 2-isopropylmalate and 3-isopropylmalate, via the formation of 2-isopropylmaleate. This chain is 3-isopropylmalate dehydratase small subunit 2, found in Chromobacterium violaceum (strain ATCC 12472 / DSM 30191 / JCM 1249 / CCUG 213 / NBRC 12614 / NCIMB 9131 / NCTC 9757 / MK).